A 549-amino-acid polypeptide reads, in one-letter code: Cytochrome c oxidase subunit 1 (549 aa).

Residues 18–38 form a helical membrane-spanning segment; the sequence is LCYLLVAILSGFVGYVYSLFI. Ca(2+) is bound by residues glutamate 41 and glycine 46. A helical transmembrane segment spans residues 42-62; sequence LSLIGCGILFGDYQFYNVLIT. Histidine 64 lines the Fe(II)-heme a pocket. 5 helical membrane-spanning segments follow: residues 66-86, 100-120, 148-168, 186-206, and 222-242; these read LIMV…NYFI, LNNM…NGFL, FVMF…INLL, LFIW…PVLA, and FYDV…WFFG. Residue histidine 243 participates in Cu cation binding. Residues 243–247 constitute a cross-link (1'-histidyl-3'-tyrosine (His-Tyr)); it reads HPEVY. A run of 2 helical transmembrane segments spans residues 246-266 and 269-289; these read VYII…VIGF and VFST…GMFV. An O2-binding site is contributed by tyrosine 247. 2 residues coordinate Cu cation: histidine 292 and histidine 293. The next 2 membrane-spanning stretches (helical) occupy residues 306–326 and 340–360; these read YFGG…FNWI and VYFV…GLFL. The Mg(2+) site is built by histidine 370 and aspartate 371. Histidine 378 serves as a coordination point for heme a3. Transmembrane regions (helical) follow at residues 379–399, 402–422, 460–480, 484–504, and 520–540; these read FHYV…IHFL, WLPI…LFIG, MLLL…FLFW, LFFV…STWL, and IVLD…IFFW. Residue histidine 380 coordinates Fe(II)-heme a.

This sequence belongs to the heme-copper respiratory oxidase family. Component of the cytochrome c oxidase (complex IV, CIV), a multisubunit enzyme composed of a catalytic core of 3 subunits and several supernumerary subunits. The complex exists as a monomer or a dimer and forms supercomplexes (SCs) in the inner mitochondrial membrane with ubiquinol-cytochrome c oxidoreductase (cytochrome b-c1 complex, complex III, CIII). Requires heme as cofactor. The cofactor is Cu cation.

Its subcellular location is the mitochondrion inner membrane. The catalysed reaction is 4 Fe(II)-[cytochrome c] + O2 + 8 H(+)(in) = 4 Fe(III)-[cytochrome c] + 2 H2O + 4 H(+)(out). It participates in energy metabolism; oxidative phosphorylation. Its function is as follows. Component of the cytochrome c oxidase, the last enzyme in the mitochondrial electron transport chain which drives oxidative phosphorylation. The respiratory chain contains 3 multisubunit complexes succinate dehydrogenase (complex II, CII), ubiquinol-cytochrome c oxidoreductase (cytochrome b-c1 complex, complex III, CIII) and cytochrome c oxidase (complex IV, CIV), that cooperate to transfer electrons derived from NADH and succinate to molecular oxygen, creating an electrochemical gradient over the inner membrane that drives transmembrane transport and the ATP synthase. Cytochrome c oxidase is the component of the respiratory chain that catalyzes the reduction of oxygen to water. Electrons originating from reduced cytochrome c in the intermembrane space (IMS) are transferred via the dinuclear copper A center (CU(A)) of subunit 2 and heme A of subunit 1 to the active site in subunit 1, a binuclear center (BNC) formed by heme A3 and copper B (CU(B)). The BNC reduces molecular oxygen to 2 water molecules using 4 electrons from cytochrome c in the IMS and 4 protons from the mitochondrial matrix. The polypeptide is Cytochrome c oxidase subunit 1 (COI) (Leishmania tarentolae (Sauroleishmania tarentolae)).